A 420-amino-acid polypeptide reads, in one-letter code: Gamma-glutamyl phosphate reductase (420 aa).

It belongs to the gamma-glutamyl phosphate reductase family.

It is found in the cytoplasm. It carries out the reaction L-glutamate 5-semialdehyde + phosphate + NADP(+) = L-glutamyl 5-phosphate + NADPH + H(+). It functions in the pathway amino-acid biosynthesis; L-proline biosynthesis; L-glutamate 5-semialdehyde from L-glutamate: step 2/2. Functionally, catalyzes the NADPH-dependent reduction of L-glutamate 5-phosphate into L-glutamate 5-semialdehyde and phosphate. The product spontaneously undergoes cyclization to form 1-pyrroline-5-carboxylate. In Streptococcus pneumoniae (strain 70585), this protein is Gamma-glutamyl phosphate reductase.